Here is a 449-residue protein sequence, read N- to C-terminus: UDP-N-acetylmuramoylalanine--D-glutamate ligase (449 aa).

117–123 (GSNGKTT) provides a ligand contact to ATP.

Belongs to the MurCDEF family.

The protein localises to the cytoplasm. It catalyses the reaction UDP-N-acetyl-alpha-D-muramoyl-L-alanine + D-glutamate + ATP = UDP-N-acetyl-alpha-D-muramoyl-L-alanyl-D-glutamate + ADP + phosphate + H(+). It participates in cell wall biogenesis; peptidoglycan biosynthesis. Cell wall formation. Catalyzes the addition of glutamate to the nucleotide precursor UDP-N-acetylmuramoyl-L-alanine (UMA). The polypeptide is UDP-N-acetylmuramoylalanine--D-glutamate ligase (Exiguobacterium sibiricum (strain DSM 17290 / CCUG 55495 / CIP 109462 / JCM 13490 / 255-15)).